Reading from the N-terminus, the 115-residue chain is MGASSGRIGKSMLTQGTFPLASSGCLKCDSTAQSLHASSSALIEFLVDFGIKPKEFPHKYVTGLSSDDSPMDLNVGMLNSSLRDSGYSPSNSKAFSIITSLFLFSTEYLGLICTY.

This is an uncharacterized protein from Saccharomyces cerevisiae (strain ATCC 204508 / S288c) (Baker's yeast).